The primary structure comprises 424 residues: MAVTIVLGSQWGDEGKGKITDMLSQEATLCCRAAGGHNAGHTIVHGNVTYDFHILPSGLVSDKCINLIGAGTVVHVPSFFKELAALEAKGLKGAAARAFISDRAHVCFDLHSVVDGLEEKGLGGRKVGTTGKGIGPCYSDKASRRGVRVGEILDEEVFERKLRTLHAGYTARFGQLDYDVEEEIARFKEYRKLLVPHIVDQLAFFNKHKDSSNTLVEGANALLLDLDHGTYPFVTSSSTGLGGAVQALHLNPTSIKSIIGVVKAYTTRVGSGPFPSEQLNEAGEKLQKVGREFGVTTGRKRRCGWFDLVLLRYSQSINHYTALNLTKLDILDDFDEIKVAVAYTLPDGTRLENTIPADAEVLNKVDVEYVTLPGWKSNTMGVKKYEDLPENARKYIEYIERELGGVPVKWIGTGPARDDMICRE.

Residues 12 to 18 (GDEGKGK) and 40 to 42 (GHT) each bind GTP. Asp-13 functions as the Proton acceptor in the catalytic mechanism. Positions 13 and 40 each coordinate Mg(2+). IMP-binding positions include 13 to 16 (DEGK), 38 to 41 (NAGH), Thr-130, Arg-144, Asn-220, Thr-235, and Arg-299. His-41 (proton donor) is an active-site residue. Residue 295-301 (VTTGRKR) coordinates substrate. GTP contacts are provided by residues Arg-301, 327–329 (KLD), and 412–414 (GTG).

The protein belongs to the adenylosuccinate synthetase family. Homodimer. Requires Mg(2+) as cofactor.

It localises to the cytoplasm. It carries out the reaction IMP + L-aspartate + GTP = N(6)-(1,2-dicarboxyethyl)-AMP + GDP + phosphate + 2 H(+). Its pathway is purine metabolism; AMP biosynthesis via de novo pathway; AMP from IMP: step 1/2. Plays an important role in the de novo pathway and in the salvage pathway of purine nucleotide biosynthesis. Catalyzes the first committed step in the biosynthesis of AMP from IMP. The protein is Adenylosuccinate synthetase (adB) of Emericella nidulans (strain FGSC A4 / ATCC 38163 / CBS 112.46 / NRRL 194 / M139) (Aspergillus nidulans).